Reading from the N-terminus, the 213-residue chain is Uridine kinase (213 aa).

Position 14–21 (14–21 (GASASGKS)) interacts with ATP.

The protein belongs to the uridine kinase family.

It localises to the cytoplasm. It catalyses the reaction uridine + ATP = UMP + ADP + H(+). The catalysed reaction is cytidine + ATP = CMP + ADP + H(+). Its pathway is pyrimidine metabolism; CTP biosynthesis via salvage pathway; CTP from cytidine: step 1/3. It functions in the pathway pyrimidine metabolism; UMP biosynthesis via salvage pathway; UMP from uridine: step 1/1. The sequence is that of Uridine kinase from Vibrio atlanticus (strain LGP32) (Vibrio splendidus (strain Mel32)).